We begin with the raw amino-acid sequence, 245 residues long: Eukaryotic translation initiation factor 6 (245 aa).

Belongs to the eIF-6 family. Monomer. Associates with the 60S ribosomal subunit.

It is found in the cytoplasm. Its subcellular location is the nucleus. It localises to the nucleolus. Binds to the 60S ribosomal subunit and prevents its association with the 40S ribosomal subunit to form the 80S initiation complex in the cytoplasm. May also be involved in ribosome biogenesis. In Xenopus laevis (African clawed frog), this protein is Eukaryotic translation initiation factor 6 (eif6).